The following is a 395-amino-acid chain: ATP phosphoribosyltransferase regulatory subunit (395 aa).

Belongs to the class-II aminoacyl-tRNA synthetase family. HisZ subfamily. Heteromultimer composed of HisG and HisZ subunits.

It is found in the cytoplasm. The protein operates within amino-acid biosynthesis; L-histidine biosynthesis; L-histidine from 5-phospho-alpha-D-ribose 1-diphosphate: step 1/9. In terms of biological role, required for the first step of histidine biosynthesis. May allow the feedback regulation of ATP phosphoribosyltransferase activity by histidine. This is ATP phosphoribosyltransferase regulatory subunit from Pseudomonas syringae pv. syringae (strain B728a).